The following is a 194-amino-acid chain: SRP-independent targeting protein 3 homolog (194 aa).

Transmembrane regions (helical) follow at residues 43-63 (ILYA…KIII) and 110-130 (LVTI…PPLL).

Belongs to the PHO88 family.

It is found in the endoplasmic reticulum membrane. Its function is as follows. May function in a SRP (signal recognition particle) and GET (guided entry of tail-anchored proteins) independent pathway for targeting a broad range of substrate proteins to the endoplasmic reticulum. Involved in inorganic phosphate uptake. Also involved in telomere length regulation and maintenance. The polypeptide is SRP-independent targeting protein 3 homolog (Schizosaccharomyces pombe (strain 972 / ATCC 24843) (Fission yeast)).